Consider the following 142-residue polypeptide: Endoribonuclease YbeY (142 aa).

The Zn(2+) site is built by H107, H111, and D117.

This sequence belongs to the endoribonuclease YbeY family. The cofactor is Zn(2+).

Its subcellular location is the cytoplasm. Its function is as follows. Single strand-specific metallo-endoribonuclease involved in late-stage 70S ribosome quality control and in maturation of the 3' terminus of the 16S rRNA. This chain is Endoribonuclease YbeY, found in Chlorobium phaeobacteroides (strain DSM 266 / SMG 266 / 2430).